Here is a 391-residue protein sequence, read N- to C-terminus: MAIINMSDLDLQGKRVLIREDLNVPVSNGVVTSDARLRASLPTIELALAKGAAVMVMSHLGRPTEGEYNSEFSMQPVVDYLAKALSCTVRLATDYLDGVEVAVGEVVVFENVRFNKGEKKNDEALSKKMAALCDVYVMDAFGTAHRAEASTNGVGLYAPIACAGPLLAQELDALGKALDNPARPLVAIVGGSKVSTKLTVLESLSGIVDQLVVGGGIANTFIAAAGHNVGKSLYEADLIDEAKRLVANAQSRGGDIPVPTDVVVAGEFSPTATATLKSVSDVSDSDMIFDIGPDSAEALAKIIESAGTIVWNGPVGVFEFDQFGEGTKRIAQAIADSKAFSIAGGGDTLAAVDKYGIADKVSYISTGGGAFLEFLEGKELPAVAMLKKRGA.

Residues 21 to 23 (DLN), R36, 59 to 62 (HLGR), R113, and R146 each bind substrate. Residues K197, E319, and 345–348 (GGDT) each bind ATP.

Belongs to the phosphoglycerate kinase family. Monomer.

The protein localises to the cytoplasm. It carries out the reaction (2R)-3-phosphoglycerate + ATP = (2R)-3-phospho-glyceroyl phosphate + ADP. It functions in the pathway carbohydrate degradation; glycolysis; pyruvate from D-glyceraldehyde 3-phosphate: step 2/5. The polypeptide is Phosphoglycerate kinase (Shewanella sp. (strain W3-18-1)).